A 134-amino-acid chain; its full sequence is Cytochrome b5 (134 aa).

Residues 6–82 (TKTFTRAEVA…MKKYKIGELV (77 aa)) form the Cytochrome b5 heme-binding domain. Residues His41 and His65 each contribute to the heme site. A disordered region spans residues 86–105 (RTSVAQKSEPTWSTEQQTEE). Over residues 87–105 (TSVAQKSEPTWSTEQQTEE) the composition is skewed to polar residues. The chain crosses the membrane as a helical span at residues 111–131 (WLVPLVLCLVATLFYKFFFGG).

The protein belongs to the cytochrome b5 family.

It localises to the endoplasmic reticulum membrane. The protein resides in the microsome membrane. Cytochrome b5 is a membrane-bound hemoprotein which functions as an electron carrier for several membrane-bound oxygenases. This Drosophila melanogaster (Fruit fly) protein is Cytochrome b5 (Cyt-b5).